A 333-amino-acid polypeptide reads, in one-letter code: Ribosomal RNA small subunit methyltransferase H (333 aa).

Residues 39 to 41 (GGY), D57, F84, D101, and Q108 each bind S-adenosyl-L-methionine.

This sequence belongs to the methyltransferase superfamily. RsmH family.

The protein resides in the cytoplasm. It catalyses the reaction cytidine(1402) in 16S rRNA + S-adenosyl-L-methionine = N(4)-methylcytidine(1402) in 16S rRNA + S-adenosyl-L-homocysteine + H(+). Specifically methylates the N4 position of cytidine in position 1402 (C1402) of 16S rRNA. This Dinoroseobacter shibae (strain DSM 16493 / NCIMB 14021 / DFL 12) protein is Ribosomal RNA small subunit methyltransferase H.